A 357-amino-acid polypeptide reads, in one-letter code: UDP-N-acetylglucosamine--N-acetylmuramyl-(pentapeptide) pyrophosphoryl-undecaprenol N-acetylglucosamine transferase (357 aa).

UDP-N-acetyl-alpha-D-glucosamine is bound by residues 7–9 (TGG), asparagine 119, arginine 159, serine 187, isoleucine 241, and glutamine 286.

The protein belongs to the glycosyltransferase 28 family. MurG subfamily.

It localises to the cell inner membrane. The catalysed reaction is di-trans,octa-cis-undecaprenyl diphospho-N-acetyl-alpha-D-muramoyl-L-alanyl-D-glutamyl-meso-2,6-diaminopimeloyl-D-alanyl-D-alanine + UDP-N-acetyl-alpha-D-glucosamine = di-trans,octa-cis-undecaprenyl diphospho-[N-acetyl-alpha-D-glucosaminyl-(1-&gt;4)]-N-acetyl-alpha-D-muramoyl-L-alanyl-D-glutamyl-meso-2,6-diaminopimeloyl-D-alanyl-D-alanine + UDP + H(+). It participates in cell wall biogenesis; peptidoglycan biosynthesis. Cell wall formation. Catalyzes the transfer of a GlcNAc subunit on undecaprenyl-pyrophosphoryl-MurNAc-pentapeptide (lipid intermediate I) to form undecaprenyl-pyrophosphoryl-MurNAc-(pentapeptide)GlcNAc (lipid intermediate II). This chain is UDP-N-acetylglucosamine--N-acetylmuramyl-(pentapeptide) pyrophosphoryl-undecaprenol N-acetylglucosamine transferase, found in Nitrosomonas europaea (strain ATCC 19718 / CIP 103999 / KCTC 2705 / NBRC 14298).